We begin with the raw amino-acid sequence, 670 residues long: DNA topoisomerase 6 subunit B (670 aa).

Positions 1–30 are disordered; the sequence is MAGDDLVETKKGSSKNSKDSNESKLKQKSP. A compositionally biased stretch (basic and acidic residues) spans 7–25; it reads VETKKGSSKNSKDSNESKL. ATP is bound by residues N60, D160, 181-182, 190-197, and K516; these read TK and GKFGLGAK.

It belongs to the TOP6B family. As to quaternary structure, homodimer. Heterotetramer of two TOP6A and two TOP6B subunits. Interacts with SPO11-2, but not with SPO11-1, RHL1 or BIN4. Highly expressed in leaves, stems, flowers and seedlings.

The protein resides in the nucleus. The enzyme catalyses ATP-dependent breakage, passage and rejoining of double-stranded DNA.. Functionally, component of the DNA topoisomerase VI involved in chromatin organization and progression of endoreduplication cycles. Relaxes both positive and negative superturns and exhibits a strong decatenase activity. The B subunit binds ATP. Involved in cell-elongation processes. The chain is DNA topoisomerase 6 subunit B from Arabidopsis thaliana (Mouse-ear cress).